The sequence spans 254 residues: MASAASASASAVVTPSSFRCVPTASCGLGARGKAPAPRRLLHDHAQGKKRAAATWSLKAGLWDSLRSGFLKSNNSTETVEPPSAPIEEEEPLPEELVLLERTLADGSTEQIIFSSAGDVNVYDLQALCDKVGWPRRPLTKIAASLRNSYLVATLHSVTTPSKAEGEERKQLIGMARATSDHAFNATIWDVLVDPSYQGQGLGKALMEKVIRTLLQRDISNITLFADNKVVDFYKNLGFEADPQGIKGMFWYPRF.

The N-terminal 83 residues, 1–83, are a transit peptide targeting the chloroplast; the sequence is MASAASASAS…NSTETVEPPS (83 aa). The 136-residue stretch at 119–254 folds into the N-acetyltransferase domain; sequence VNVYDLQALC…IKGMFWYPRF (136 aa).

The protein resides in the plastid. It localises to the chloroplast. The protein localises to the nucleus. The catalysed reaction is a 2-arylethylamine + acetyl-CoA = an N-acetyl-2-arylethylamine + CoA + H(+). Its pathway is aromatic compound metabolism; melatonin biosynthesis; melatonin from serotonin: step 1/2. Catalyzes the N-acetylation of serotonin into N-acetylserotonin, the penultimate step in the synthesis of melatonin. Catalyzes in vitro the N-acetylation of tryptamine to produce N-acetyltryptamine, 5-methoxytryptamine to produce melatonin and tyramine to produce N-acetyltyramine. Acetyltransferase required for geminivirus infection and systemic spread. The polypeptide is Serotonin N-acetyltransferase 1, chloroplastic (Oryza sativa subsp. indica (Rice)).